The primary structure comprises 222 residues: Putative N-acetylmannosamine-6-phosphate 2-epimerase (222 aa).

This sequence belongs to the NanE family.

It carries out the reaction an N-acyl-D-glucosamine 6-phosphate = an N-acyl-D-mannosamine 6-phosphate. The protein operates within amino-sugar metabolism; N-acetylneuraminate degradation; D-fructose 6-phosphate from N-acetylneuraminate: step 3/5. Its function is as follows. Converts N-acetylmannosamine-6-phosphate (ManNAc-6-P) to N-acetylglucosamine-6-phosphate (GlcNAc-6-P). This Staphylococcus aureus (strain bovine RF122 / ET3-1) protein is Putative N-acetylmannosamine-6-phosphate 2-epimerase.